The sequence spans 993 residues: uncharacterized protein (993 aa).

The first 28 residues, 1–28 (MKLFPRSILITLVLSFALNLGIVTKIHA), serve as a signal peptide directing secretion. The next 7 helical transmembrane spans lie at 331–351 (IVTAFLTLYVMFFGFKLLLAG), 359–379 (YINFILKMIFVTYFSIGINIT), 392–412 (MIQWAFPFLLDGINGLASWVM), 494–514 (MLVSLALSYPLLVISVAAFMV), 521–541 (MISIVILGILAPLFVPMFLFA), 554–574 (MISFLLQPMVVVTFMITMFSV), and 699–719 (IKNILLALVMACFTLYLMYNF). Positions 779–904 (GQGGGASDLE…EKVDSTSKGT (126 aa)) are disordered. The span at 805 to 829 (TSAPAVTTPTASSSVASSSPKTVSS) shows a compositional bias: low complexity. Residues 838–850 (PPAPTEAVSPPPA) show a composition bias toward pro residues. Residues 866-879 (IIRDNNQESKKEID) show a composition bias toward basic and acidic residues.

The protein belongs to the TrbL/VirB6 family.

The protein localises to the cell membrane. This is an uncharacterized protein from Rickettsia conorii (strain ATCC VR-613 / Malish 7).